Consider the following 396-residue polypeptide: Acetate kinase (396 aa).

Asparagine 7 provides a ligand contact to Mg(2+). ATP is bound at residue lysine 14. Arginine 89 is a substrate binding site. Catalysis depends on aspartate 146, which acts as the Proton donor/acceptor. Residues 206–210, 280–282, and 328–332 contribute to the ATP site; these read HLGNG, DLR, and GIGEN. Glutamate 382 is a Mg(2+) binding site.

This sequence belongs to the acetokinase family. As to quaternary structure, homodimer. Mg(2+) serves as cofactor. Requires Mn(2+) as cofactor.

It is found in the cytoplasm. It carries out the reaction acetate + ATP = acetyl phosphate + ADP. The protein operates within metabolic intermediate biosynthesis; acetyl-CoA biosynthesis; acetyl-CoA from acetate: step 1/2. In terms of biological role, catalyzes the formation of acetyl phosphate from acetate and ATP. Can also catalyze the reverse reaction. The chain is Acetate kinase from Maridesulfovibrio salexigens (strain ATCC 14822 / DSM 2638 / NCIMB 8403 / VKM B-1763) (Desulfovibrio salexigens).